A 326-amino-acid polypeptide reads, in one-letter code: MGMIISMAMTAVTIWTKTKPGRVSCFIRKNSTMVNAPIGIIGGSGLYQMEALKNVEEVTLDTPFGAPSDSFIVGELAGVRVAFLARHGRGHHLLPSEIPFRANIHGMKQLGVKYLISASAVGSLQAEAKPLDMVVPDQFIDRTRQRISTFFGEGIVAHIGFGNPICPQLAQCLSTAIAGLELEGVTLHDRGTYVSMEGPAFSTIAESNLYRSWGGTVIGMTNLPEAKLAREAEIAYATLALVTDYDCWHPDHDHVTVEMVIGNLQKNAVNAQQVILETVKQLAANPFESIAHRALQYAVLTPPDKFPAATYEKLSLLLGKYYPPAP.

Phosphate is bound by residues Ser44, 86–87 (RH), and 119–120 (SA). Position 220 (Met220) interacts with substrate. Thr221 is a phosphate binding site. 244-246 (DYD) is a substrate binding site.

Belongs to the PNP/MTAP phosphorylase family. MTAP subfamily. Homohexamer. Dimer of a homotrimer.

It carries out the reaction S-methyl-5'-thioadenosine + phosphate = 5-(methylsulfanyl)-alpha-D-ribose 1-phosphate + adenine. Its pathway is amino-acid biosynthesis; L-methionine biosynthesis via salvage pathway; S-methyl-5-thio-alpha-D-ribose 1-phosphate from S-methyl-5'-thioadenosine (phosphorylase route): step 1/1. Functionally, catalyzes the reversible phosphorylation of S-methyl-5'-thioadenosine (MTA) to adenine and 5-methylthioribose-1-phosphate. Involved in the breakdown of MTA, a major by-product of polyamine biosynthesis. Responsible for the first step in the methionine salvage pathway after MTA has been generated from S-adenosylmethionine. Has broad substrate specificity with 6-aminopurine nucleosides as preferred substrates. This is S-methyl-5'-thioadenosine phosphorylase from Synechocystis sp. (strain PCC 6803 / GT-S).